A 103-amino-acid polypeptide reads, in one-letter code: UPF0235 protein Dole_0289 (103 aa).

Belongs to the UPF0235 family.

The polypeptide is UPF0235 protein Dole_0289 (Desulfosudis oleivorans (strain DSM 6200 / JCM 39069 / Hxd3) (Desulfococcus oleovorans)).